Consider the following 252-residue polypeptide: Hydroxyacylglutathione hydrolase (252 aa).

Residues H54, H56, D58, H59, H111, D130, and H170 each contribute to the Zn(2+) site.

The protein belongs to the metallo-beta-lactamase superfamily. Glyoxalase II family. In terms of assembly, monomer. Zn(2+) is required as a cofactor.

The enzyme catalyses an S-(2-hydroxyacyl)glutathione + H2O = a 2-hydroxy carboxylate + glutathione + H(+). It participates in secondary metabolite metabolism; methylglyoxal degradation; (R)-lactate from methylglyoxal: step 2/2. Thiolesterase that catalyzes the hydrolysis of S-D-lactoyl-glutathione to form glutathione and D-lactic acid. This chain is Hydroxyacylglutathione hydrolase, found in Francisella tularensis subsp. holarctica (strain FTNF002-00 / FTA).